The sequence spans 104 residues: uncharacterized protein (104 aa).

This is an uncharacterized protein from Bacillus subtilis (strain 168).